We begin with the raw amino-acid sequence, 429 residues long: Chaperone SurA (429 aa).

Residues 1–18 form the signal peptide; sequence MFKRIALVCALFSGVCFA. 2 consecutive PpiC domains span residues 170–271 and 281–380; these read NLTY…KLVA and ITQT…EVIA.

It localises to the periplasm. The enzyme catalyses [protein]-peptidylproline (omega=180) = [protein]-peptidylproline (omega=0). Its function is as follows. Chaperone involved in the correct folding and assembly of outer membrane proteins. Recognizes specific patterns of aromatic residues and the orientation of their side chains, which are found more frequently in integral outer membrane proteins. May act in both early periplasmic and late outer membrane-associated steps of protein maturation. The sequence is that of Chaperone SurA from Legionella pneumophila subsp. pneumophila (strain Philadelphia 1 / ATCC 33152 / DSM 7513).